The sequence spans 501 residues: Flagellin (501 aa).

It belongs to the bacterial flagellin family.

It is found in the secreted. Its subcellular location is the bacterial flagellum. Flagellin is the subunit protein which polymerizes to form the filaments of bacterial flagella. The chain is Flagellin (flaA) from Aquifex pyrophilus.